A 631-amino-acid polypeptide reads, in one-letter code: 1-deoxy-D-xylulose-5-phosphate synthase (631 aa).

Thiamine diphosphate contacts are provided by residues H74 and 115 to 117 (GHS). D146 contributes to the Mg(2+) binding site. Residues 147–148 (GA), N175, Y286, and E368 contribute to the thiamine diphosphate site. Position 175 (N175) interacts with Mg(2+).

This sequence belongs to the transketolase family. DXPS subfamily. As to quaternary structure, homodimer. It depends on Mg(2+) as a cofactor. Thiamine diphosphate serves as cofactor.

The catalysed reaction is D-glyceraldehyde 3-phosphate + pyruvate + H(+) = 1-deoxy-D-xylulose 5-phosphate + CO2. Its pathway is metabolic intermediate biosynthesis; 1-deoxy-D-xylulose 5-phosphate biosynthesis; 1-deoxy-D-xylulose 5-phosphate from D-glyceraldehyde 3-phosphate and pyruvate: step 1/1. Functionally, catalyzes the acyloin condensation reaction between C atoms 2 and 3 of pyruvate and glyceraldehyde 3-phosphate to yield 1-deoxy-D-xylulose-5-phosphate (DXP). The sequence is that of 1-deoxy-D-xylulose-5-phosphate synthase from Natranaerobius thermophilus (strain ATCC BAA-1301 / DSM 18059 / JW/NM-WN-LF).